The primary structure comprises 130 residues: Large ribosomal subunit protein bL20 (130 aa).

This sequence belongs to the bacterial ribosomal protein bL20 family.

Binds directly to 23S ribosomal RNA and is necessary for the in vitro assembly process of the 50S ribosomal subunit. It is not involved in the protein synthesizing functions of that subunit. This chain is Large ribosomal subunit protein bL20, found in Salinispora tropica (strain ATCC BAA-916 / DSM 44818 / JCM 13857 / NBRC 105044 / CNB-440).